Reading from the N-terminus, the 99-residue chain is Transmembrane protein 14A (99 aa).

3 helical membrane passes run 1–21, 24–44, and 79–99; these read MDLI…FGYK, GGVP…YGAY, and PAGL…LLLL.

Belongs to the TMEM14 family. As to expression, expressed at significantly higher levels in ovarian cancer tissues than in normal tissues (at protein level).

It localises to the mitochondrion membrane. The protein localises to the endoplasmic reticulum membrane. Its function is as follows. Inhibits apoptosis via negative regulation of the mitochondrial outer membrane permeabilization involved in apoptotic signaling pathway. The chain is Transmembrane protein 14A (TMEM14A) from Homo sapiens (Human).